A 359-amino-acid polypeptide reads, in one-letter code: Peptide chain release factor 1 (359 aa).

Glutamine 235 bears the N5-methylglutamine mark.

Belongs to the prokaryotic/mitochondrial release factor family. Methylated by PrmC. Methylation increases the termination efficiency of RF1.

It localises to the cytoplasm. Its function is as follows. Peptide chain release factor 1 directs the termination of translation in response to the peptide chain termination codons UAG and UAA. In Nitrosomonas eutropha (strain DSM 101675 / C91 / Nm57), this protein is Peptide chain release factor 1.